The chain runs to 337 residues: Holliday junction branch migration complex subunit RuvB (337 aa).

A large ATPase domain (RuvB-L) region spans residues Met-1–Tyr-182. Positions 21, 22, 63, 66, 67, 68, 172, 182, and 219 each coordinate ATP. Thr-67 is a binding site for Mg(2+). The small ATPAse domain (RuvB-S) stretch occupies residues Asn-183–Glu-253. Positions Gly-256–Thr-337 are head domain (RuvB-H). The DNA site is built by Arg-311 and Arg-316.

It belongs to the RuvB family. Homohexamer. Forms an RuvA(8)-RuvB(12)-Holliday junction (HJ) complex. HJ DNA is sandwiched between 2 RuvA tetramers; dsDNA enters through RuvA and exits via RuvB. An RuvB hexamer assembles on each DNA strand where it exits the tetramer. Each RuvB hexamer is contacted by two RuvA subunits (via domain III) on 2 adjacent RuvB subunits; this complex drives branch migration. In the full resolvosome a probable DNA-RuvA(4)-RuvB(12)-RuvC(2) complex forms which resolves the HJ.

The protein localises to the cytoplasm. It carries out the reaction ATP + H2O = ADP + phosphate + H(+). Its function is as follows. The RuvA-RuvB-RuvC complex processes Holliday junction (HJ) DNA during genetic recombination and DNA repair, while the RuvA-RuvB complex plays an important role in the rescue of blocked DNA replication forks via replication fork reversal (RFR). RuvA specifically binds to HJ cruciform DNA, conferring on it an open structure. The RuvB hexamer acts as an ATP-dependent pump, pulling dsDNA into and through the RuvAB complex. RuvB forms 2 homohexamers on either side of HJ DNA bound by 1 or 2 RuvA tetramers; 4 subunits per hexamer contact DNA at a time. Coordinated motions by a converter formed by DNA-disengaged RuvB subunits stimulates ATP hydrolysis and nucleotide exchange. Immobilization of the converter enables RuvB to convert the ATP-contained energy into a lever motion, pulling 2 nucleotides of DNA out of the RuvA tetramer per ATP hydrolyzed, thus driving DNA branch migration. The RuvB motors rotate together with the DNA substrate, which together with the progressing nucleotide cycle form the mechanistic basis for DNA recombination by continuous HJ branch migration. Branch migration allows RuvC to scan DNA until it finds its consensus sequence, where it cleaves and resolves cruciform DNA. This Clostridium novyi (strain NT) protein is Holliday junction branch migration complex subunit RuvB.